The following is a 388-amino-acid chain: Angiopoietin-related protein 5 (388 aa).

The signal sequence occupies residues 1 to 25 (MMSPSQASLLFLNVCIFICGEAVQG). N-linked (GlcNAc...) asparagine glycosylation occurs at N53. The stretch at 98–123 (LRNMMDEQQASLDYLSNQVNELMNRV) forms a coiled coil. Positions 141-383 (RPVQSHGLDC…SVSMKIRRMY (243 aa)) constitute a Fibrinogen C-terminal domain. N238 carries an N-linked (GlcNAc...) asparagine glycan. Disulfide bonds link C310–C314 and C324–C338. N-linked (GlcNAc...) asparagine glycosylation occurs at N329.

As to expression, mainly expressed in adult heart.

The protein localises to the secreted. This is Angiopoietin-related protein 5 (ANGPTL5) from Homo sapiens (Human).